Reading from the N-terminus, the 485-residue chain is Auxin transporter protein 1 (485 aa).

Residues 1 to 59 (MSEGVEAIVANDNGTDQVNGNRTGKDNEEHDGSTGSNLSNFLWHGGSVWDAWFSCASNQ) lie on the Cytoplasmic side of the membrane. Residues 12 to 22 (DNGTDQVNGNR) show a composition bias toward polar residues. Residues 12–33 (DNGTDQVNGNRTGKDNEEHDGS) are disordered. The segment covering 23 to 32 (TGKDNEEHDG) has biased composition (basic and acidic residues). A helical transmembrane segment spans residues 60-77 (VAQVLLTLPYSFSQLGML). Topologically, residues 78–79 (SG) are extracellular. The helical transmembrane segment at 80 to 100 (IVLQIFYGLLGSWTAYLISVL) threads the bilayer. Residues 101-135 (YVEYRARKEKEGKSFKNHVIQWFEVLDGLLGSYWK) are Cytoplasmic-facing. A helical membrane pass occupies residues 136-156 (ALGLAFNCTFLLFGSVIQLIA). Topologically, residues 157 to 172 (CASNIYYINDHLDKRT) are extracellular. The chain crosses the membrane as a helical span at residues 173–193 (WTYIFGACCATTVFIPSFHNY). Topologically, residues 194 to 196 (RIW) are cytoplasmic. A helical transmembrane segment spans residues 197–217 (SFLGLGMTTYTAWYLAIASII). Residues 218 to 232 (HGQAEGVKHSGPTKL) are Extracellular-facing. The helical transmembrane segment at 233–253 (VLYFTGATNILYTFGGHAVTV) threads the bilayer. Over 254 to 266 (EIMHAMWKPQKFK) the chain is Cytoplasmic. Residues 267-287 (YIYLMATLYVFTLTIPSAAAV) traverse the membrane as a helical segment. Over 288–314 (YWAFGDALLDHSNAFSLMPKNAWRDAA) the chain is Extracellular. The chain crosses the membrane as a helical span at residues 315-335 (VILMLIHQFITFGFACTPLYF). Residues 336 to 356 (VWEKVIGMHDTKSICLRALAR) lie on the Cytoplasmic side of the membrane. A helical membrane pass occupies residues 357–377 (LPVVIPIWFLAIIFPFFGPIN). A topological domain (extracellular) is located at residue serine 378. Residues 379–399 (AVGALLVSFTVYIIPSLAHML) traverse the membrane as a helical segment. Over 400–425 (TYRSASARQNAAEKPPFFMPSWTAMY) the chain is Cytoplasmic. A helical membrane pass occupies residues 426–446 (VLNAFVVVWVLIVGFGFGGWA). Over 447–485 (SVTNFVRQVDTFGLFAKCYQCKPAAAAAHAPVSALHHRL) the chain is Extracellular.

The protein belongs to the amino acid/polyamine transporter 2 family. Amino acid/auxin permease (AAAP) (TC 2.A.18.1) subfamily. In terms of tissue distribution, expressed in root and shoot apical tissues. In root apex, confined to stele initials, protophloem poles, statolith-containing S2 columella cells, lateral root cap cells (LRC), and in epidermal cells from the distal elongation zone (DEZ) up to central elongation zone (CEZ).

The protein resides in the cell membrane. With respect to regulation, auxin uptake mediated by AUX1 is inhibited by chromosaponin-1 (CSI), 1-naphthoxyacetic acid (1-NOA) and 3-chloro-4-hydroxyphenylacetic acid (CHPAA). Functionally, carrier protein involved in proton-driven auxin influx. Mediates the formation of auxin gradient from developing leaves (site of auxin biosynthesis) to tips by contributing to the loading of auxin in vascular tissues and facilitating acropetal (base to tip) auxin transport within inner tissues of the root apex, and basipetal (tip to base) auxin transport within outer tissues of the root apex. Unloads auxin from the mature phloem to deliver the hormone to the root meristem via the protophloem cell files. Coordinated subcellular localization of AUX1 is regulated by a brefeldin A-sensitive (BFA) vesicle trafficking process. Involved in lateral root formation, trichoblast polarization and root hair elongation. Required for gravitropism and thigmotropism, especially in roots, by modulating responses to auxin, ethylene and cytokinins such as benzyladenine (BA). Needed for ammonium-mediated root-growth inhibition. Confers sensitivity to the herbicide 2,4-dichlorophenoxyacetic acid (2,4-D, auxin analog), and to polar auxin transport inhibitors such as N-1-naphthylphthalamic acid (NPA) and 2,3,5-triiodobenzoic acid (TIBA). This chain is Auxin transporter protein 1 (AUX1), found in Arabidopsis thaliana (Mouse-ear cress).